The primary structure comprises 746 residues: 1,4-alpha-glucan branching enzyme GlgB (746 aa).

Residue Asp418 is the Nucleophile of the active site. Residue Glu471 is the Proton donor of the active site.

Belongs to the glycosyl hydrolase 13 family. GlgB subfamily. Monomer.

It carries out the reaction Transfers a segment of a (1-&gt;4)-alpha-D-glucan chain to a primary hydroxy group in a similar glucan chain.. It participates in glycan biosynthesis; glycogen biosynthesis. Catalyzes the formation of the alpha-1,6-glucosidic linkages in glycogen by scission of a 1,4-alpha-linked oligosaccharide from growing alpha-1,4-glucan chains and the subsequent attachment of the oligosaccharide to the alpha-1,6 position. The sequence is that of 1,4-alpha-glucan branching enzyme GlgB from Nitrosospira multiformis (strain ATCC 25196 / NCIMB 11849 / C 71).